The following is a 371-amino-acid chain: 4-hydroxybenzoate polyprenyltransferase, mitochondrial (371 aa).

The transit peptide at 1-34 (MLGSRAAGFARGLRAVALAWLPGWRGRSFALARA) directs the protein to the mitochondrion. Topologically, residues 35–83 (AGAPHGGDLQPPACPEPRGRQLSLSAAAVVDSAPRPLQPYLRLMRLDKP) are mitochondrial matrix. The chain crosses the membrane as a helical span at residues 84-104 (IGTWLLYLPCTWSIGLAAEPG). Residues 105–108 (CFPD) lie on the Mitochondrial intermembrane side of the membrane. A helical transmembrane segment spans residues 109–129 (WYMLSLFGTGAILMRGAGCTI). At 130 to 148 (NDMWDQDYDKKVTRTANRP) the chain is on the mitochondrial matrix side. Residues 149–169 (IAAGDISTFQSFVFLGGQLTL) traverse the membrane as a helical segment. The Mitochondrial intermembrane portion of the chain corresponds to 170–172 (ALG). A helical membrane pass occupies residues 173–193 (VLLCLNYYSIALGAGSLLLVI). The Mitochondrial matrix segment spans residues 194 to 203 (TYPLMKRISY). A helical membrane pass occupies residues 204–224 (WPQLALGLTFNWGALLGWSAI). Residues 225 to 231 (KGSCDPS) are Mitochondrial intermembrane-facing. A helical membrane pass occupies residues 232–252 (VCLPLYFSGVMWTLIYDTIYA). At 253 to 277 (HQDKRDDVLIGLKSTALRFGENTKP) the chain is on the mitochondrial matrix side. The chain crosses the membrane as a helical span at residues 278 to 298 (WLSGFSVAMLGALSLVGVNSG). Residues 299 to 300 (QT) lie on the Mitochondrial intermembrane side of the membrane. Residues 301–321 (APYYAALGAVGAHLTHQIYTL) traverse the membrane as a helical segment. Residues 322-332 (DIHRPEDCWNK) lie on the Mitochondrial matrix side of the membrane. The helical transmembrane segment at 333 to 353 (FISNRTLGLIVFLGIVLGNLW) threads the bilayer. The Mitochondrial intermembrane segment spans residues 354 to 371 (KEKKTDKTKKGIENKIEN).

It belongs to the UbiA prenyltransferase family. The cofactor is Mg(2+). In terms of tissue distribution, widely expressed. Present in all of the tissues tested. Expressed at higher level in skeletal muscle, adrenal glands and the heart.

The protein localises to the mitochondrion inner membrane. It catalyses the reaction an all-trans-polyprenyl diphosphate + 4-hydroxybenzoate = a 4-hydroxy-3-(all-trans-polyprenyl)benzoate + diphosphate. The catalysed reaction is all-trans-decaprenyl diphosphate + 4-hydroxybenzoate = 4-hydroxy-3-(all-trans-decaprenyl)benzoate + diphosphate. It carries out the reaction all-trans-nonaprenyl diphosphate + 4-hydroxybenzoate = 4-hydroxy-3-(all-trans-nonaprenyl)benzoate + diphosphate. It functions in the pathway cofactor biosynthesis; ubiquinone biosynthesis. Mediates the second step in the final reaction sequence of coenzyme Q (CoQ) biosynthesis. Catalyzes the prenylation of para-hydroxybenzoate (PHB) with an all-trans polyprenyl donor (such as all-trans-decaprenyl diphosphate). The length of the polyprenyl side chain varies depending on the species, in humans, the side chain is comprised of 10 isoprenyls (decaprenyl) producing CoQ10 (also known as ubiquinone), whereas rodents predominantly generate CoQ9. However, this specificity is not complete, human tissues have low amounts of CoQ9 and rodent organs contain some CoQ10. Plays a central role in the biosynthesis of CoQ10. CoQ10 is a vital molecule that transports electrons from mitochondrial respiratory chain complexes. CoQs also function as cofactors for uncoupling protein and play a role as regulators of the extracellularly-induced ceramide-dependent apoptotic pathway. Regulates mitochondrial permeability transition pore (mPTP) opening and ROS production (pivotal events in cell death) in a tissue specific manner. The sequence is that of 4-hydroxybenzoate polyprenyltransferase, mitochondrial from Homo sapiens (Human).